A 302-amino-acid chain; its full sequence is Putative cyclin-D6-1 (302 aa).

The protein belongs to the cyclin family. Cyclin D subfamily.

The polypeptide is Putative cyclin-D6-1 (CYCD6-1) (Arabidopsis thaliana (Mouse-ear cress)).